A 101-amino-acid chain; its full sequence is NADH-quinone oxidoreductase subunit K (101 aa).

Helical transmembrane passes span 4-24 (LTHYLVLGALLFGISAMGIFM), 30-50 (LVLLMSIELMLLAVNFNFIAF), and 61-81 (IFVFFVLTVAAAESAIGLAIM).

It belongs to the complex I subunit 4L family. As to quaternary structure, NDH-1 is composed of 14 different subunits. Subunits NuoA, H, J, K, L, M, N constitute the membrane sector of the complex.

It localises to the cell inner membrane. The enzyme catalyses a quinone + NADH + 5 H(+)(in) = a quinol + NAD(+) + 4 H(+)(out). NDH-1 shuttles electrons from NADH, via FMN and iron-sulfur (Fe-S) centers, to quinones in the respiratory chain. The immediate electron acceptor for the enzyme in this species is believed to be ubiquinone. Couples the redox reaction to proton translocation (for every two electrons transferred, four hydrogen ions are translocated across the cytoplasmic membrane), and thus conserves the redox energy in a proton gradient. The polypeptide is NADH-quinone oxidoreductase subunit K (Neisseria meningitidis serogroup B (strain ATCC BAA-335 / MC58)).